We begin with the raw amino-acid sequence, 856 residues long: Alanine/arginine aminopeptidase (856 aa).

Residues glutamate 132 and 264 to 268 contribute to the substrate site; that span reads GAMEN. A Zn(2+)-binding site is contributed by histidine 300. Glutamate 301 serves as the catalytic Proton acceptor. Positions 304 and 323 each coordinate Zn(2+).

It belongs to the peptidase M1 family. Zn(2+) serves as cofactor.

Its function is as follows. Positive effector of glycogen accumulation. May be involved in nutrient-sensing. In Saccharomyces cerevisiae (strain ATCC 204508 / S288c) (Baker's yeast), this protein is Alanine/arginine aminopeptidase (AAP1).